The sequence spans 286 residues: Puff II/9-1 protein (286 aa).

Residues 1–19 (MKQFIVLTVVLLAIQELQG) form the signal peptide. The interval 61-235 (ITAIKKDNDF…ENALNTLRCE (175 aa)) is helical. Asparagine 156 is a glycosylation site (N-linked (GlcNAc...) asparagine).

In Bradysia coprophila (Dark-winged fungus gnat), this protein is Puff II/9-1 protein (II/9-1).